The sequence spans 276 residues: Zinc transporter ZTP29 (276 aa).

At Met-1 to Leu-6 the chain is on the cytoplasmic side. Residues Val-7 to Val-27 form a helical membrane-spanning segment. The Lumenal segment spans residues Leu-28–Lys-35. The chain crosses the membrane as a helical span at residues Met-36 to Leu-56. Residues Ala-57–Ser-63 are Cytoplasmic-facing. A helical transmembrane segment spans residues Ile-64–Thr-84. At Lys-85 to Ser-123 the chain is on the lumenal side. The chain crosses the membrane as a helical span at residues Gly-124–Leu-144. Residues Gly-145 to Leu-156 are Cytoplasmic-facing. The chain crosses the membrane as a helical span at residues Ala-157–Phe-177. The Lumenal portion of the chain corresponds to Ala-178–Lys-187. A helical membrane pass occupies residues Leu-188–Pro-208. At Arg-209 to Leu-219 the chain is on the cytoplasmic side. A helical membrane pass occupies residues Leu-220–Phe-240. The Lumenal segment spans residues Asp-241 to Lys-250. A helical transmembrane segment spans residues Ala-251–Pro-271. The Cytoplasmic segment spans residues Glu-272 to Leu-276.

This sequence belongs to the ZIP transporter (TC 2.A.5) family. ZupT subfamily. In terms of tissue distribution, expressed in hypocotyls, cotyledons, leaves and anthers.

It is found in the endoplasmic reticulum membrane. Functionally, zinc transporter involved response to salt stress. May act through the regulation of zinc levels required to induce the unfolded protein response (UPR) pathway. In Arabidopsis thaliana (Mouse-ear cress), this protein is Zinc transporter ZTP29 (ZTP29).